Here is a 278-residue protein sequence, read N- to C-terminus: Casein kinase II subunit beta (278 aa).

Disordered stretches follow at residues 1–22 (MSQEFVEDYSRTGSSDDEDSGA) and 78–111 (DEEEDEDDVVEEDEVDQEMQSNDGHDEGKRRNKS). S2 is modified (N-acetylserine). The residue at position 2 (S2) is a Phosphoserine. The segment covering 78–94 (DEEEDEDDVVEEDEVDQ) has biased composition (acidic residues).

The protein belongs to the casein kinase 2 subunit beta family. In terms of assembly, tetramer composed of an alpha subunit, an alpha' subunit, one beta subunit and one beta' subunit. Interacts with FACT subunits POB3 and SPT16. interacts with YTA7. In terms of processing, phosphorylated by alpha subunit.

Its function is as follows. Regulatory subunit of casein kinase II/CK2. As part of the kinase complex regulates the basal catalytic activity of the alpha subunit a constitutively active serine/threonine-protein kinase that phosphorylates a large number of substrates containing acidic residues C-terminal to the phosphorylated serine or threonine. In Saccharomyces cerevisiae (strain ATCC 204508 / S288c) (Baker's yeast), this protein is Casein kinase II subunit beta (CKB1).